We begin with the raw amino-acid sequence, 184 residues long: Acireductone dioxygenase (184 aa).

4 residues coordinate Fe(2+): His-87, His-89, Glu-93, and His-137. 4 residues coordinate Ni(2+): His-87, His-89, Glu-93, and His-137.

This sequence belongs to the acireductone dioxygenase (ARD) family. Requires Fe(2+) as cofactor. Ni(2+) serves as cofactor.

It localises to the cytoplasm. Its subcellular location is the nucleus. It carries out the reaction 1,2-dihydroxy-5-(methylsulfanyl)pent-1-en-3-one + O2 = 4-methylsulfanyl-2-oxobutanoate + formate + 2 H(+). The enzyme catalyses 1,2-dihydroxy-5-(methylsulfanyl)pent-1-en-3-one + O2 = 3-(methylsulfanyl)propanoate + CO + formate + 2 H(+). It functions in the pathway amino-acid biosynthesis; L-methionine biosynthesis via salvage pathway; L-methionine from S-methyl-5-thio-alpha-D-ribose 1-phosphate: step 5/6. Functionally, catalyzes 2 different reactions between oxygen and the acireductone 1,2-dihydroxy-3-keto-5-methylthiopentene (DHK-MTPene) depending upon the metal bound in the active site. Fe-containing acireductone dioxygenase (Fe-ARD) produces formate and 2-keto-4-methylthiobutyrate (KMTB), the alpha-ketoacid precursor of methionine in the methionine recycle pathway. Ni-containing acireductone dioxygenase (Ni-ARD) produces methylthiopropionate, carbon monoxide and formate, and does not lie on the methionine recycle pathway. This is Acireductone dioxygenase from Ciona intestinalis (Transparent sea squirt).